Consider the following 275-residue polypeptide: Large ribosomal subunit protein uL2 (275 aa).

Positions 219 to 263 are disordered; that stretch reads EVRGAAMNPRDHPHGGGEGRAPRGMPTPKTKWGKPARGVKTRHNP. Residues 227 to 239 are compositionally biased toward basic and acidic residues; it reads PRDHPHGGGEGRA. A compositionally biased stretch (basic residues) spans 249 to 262; sequence KWGKPARGVKTRHN.

It belongs to the universal ribosomal protein uL2 family. In terms of assembly, part of the 50S ribosomal subunit. Forms a bridge to the 30S subunit in the 70S ribosome.

Its function is as follows. One of the primary rRNA binding proteins. Required for association of the 30S and 50S subunits to form the 70S ribosome, for tRNA binding and peptide bond formation. It has been suggested to have peptidyltransferase activity; this is somewhat controversial. Makes several contacts with the 16S rRNA in the 70S ribosome. This Roseiflexus castenholzii (strain DSM 13941 / HLO8) protein is Large ribosomal subunit protein uL2.